Consider the following 402-residue polypeptide: NADH-quinone oxidoreductase subunit D (402 aa).

It belongs to the complex I 49 kDa subunit family. In terms of assembly, NDH-1 is composed of 14 different subunits. Subunits NuoB, C, D, E, F, and G constitute the peripheral sector of the complex.

Its subcellular location is the cell inner membrane. It catalyses the reaction a quinone + NADH + 5 H(+)(in) = a quinol + NAD(+) + 4 H(+)(out). Functionally, NDH-1 shuttles electrons from NADH, via FMN and iron-sulfur (Fe-S) centers, to quinones in the respiratory chain. The immediate electron acceptor for the enzyme in this species is believed to be ubiquinone. Couples the redox reaction to proton translocation (for every two electrons transferred, four hydrogen ions are translocated across the cytoplasmic membrane), and thus conserves the redox energy in a proton gradient. The polypeptide is NADH-quinone oxidoreductase subunit D (Xanthobacter autotrophicus (strain ATCC BAA-1158 / Py2)).